The sequence spans 347 residues: DNA-directed RNA polymerase subunit alpha (347 aa).

Residues 1–226 (MLISQRPTLS…ELFGLARELN (226 aa)) form an alpha N-terminal domain (alpha-NTD) region. An alpha C-terminal domain (alpha-CTD) region spans residues 241–347 (ADHIASFALP…DQDYAETEQL (107 aa)).

Belongs to the RNA polymerase alpha chain family. In terms of assembly, homodimer. The RNAP catalytic core consists of 2 alpha, 1 beta, 1 beta' and 1 omega subunit. When a sigma factor is associated with the core the holoenzyme is formed, which can initiate transcription.

The catalysed reaction is RNA(n) + a ribonucleoside 5'-triphosphate = RNA(n+1) + diphosphate. Functionally, DNA-dependent RNA polymerase catalyzes the transcription of DNA into RNA using the four ribonucleoside triphosphates as substrates. The chain is DNA-directed RNA polymerase subunit alpha from Mycobacterium ulcerans (strain Agy99).